The sequence spans 699 residues: Elongation factor G (699 aa).

Residues 8-290 form the tr-type G domain; the sequence is ERYRNIGIMA…AVLDYLPSPV (283 aa). GTP contacts are provided by residues 17–24, 88–92, and 142–145; these read AHIDAGKT, DTPGH, and NKMD.

Belongs to the TRAFAC class translation factor GTPase superfamily. Classic translation factor GTPase family. EF-G/EF-2 subfamily.

It is found in the cytoplasm. Functionally, catalyzes the GTP-dependent ribosomal translocation step during translation elongation. During this step, the ribosome changes from the pre-translocational (PRE) to the post-translocational (POST) state as the newly formed A-site-bound peptidyl-tRNA and P-site-bound deacylated tRNA move to the P and E sites, respectively. Catalyzes the coordinated movement of the two tRNA molecules, the mRNA and conformational changes in the ribosome. This Acidithiobacillus ferrooxidans (strain ATCC 23270 / DSM 14882 / CIP 104768 / NCIMB 8455) (Ferrobacillus ferrooxidans (strain ATCC 23270)) protein is Elongation factor G.